A 242-amino-acid polypeptide reads, in one-letter code: MTEAVPSSALSEVSLRLLCHDDIDTVKHLCGDWFPIEYPDSWYRDITSNKKFFSLAATYRGDIVGMIVAEIKNRTKIHKEDGDILASSFSVDTQVAYILSLGVVKEFRKHGIGSLLLESLKDHISTTAQDHCKAIYLHVLTTNNTAISFYENRDFKQHHYLPYYYSIRGVLKDGFTYVLYINGGHPPWTILDYIQHLGSALANLSPCSIPHRIYRQAQSLLCSFLPWSSISTKGGIEYSRTM.

The Cytoplasmic segment spans residues 1-192 (MTEAVPSSAL…GGHPPWTILD (192 aa)). Positions 13–182 (VSLRLLCHDD…DGFTYVLYIN (170 aa)) constitute an N-acetyltransferase domain. Tyr-38 is a substrate binding site. Lys-79 is subject to N6-acetyllysine; by autocatalysis. Tyr-97 is an active-site residue. Leu-99 contributes to the substrate binding site. 101 to 103 (LGV) serves as a coordination point for acetyl-CoA. Residues Lys-105, Lys-109, and Lys-121 each carry the N6-acetyllysine; by autocatalysis modification. 109-114 (KHGIGS) lines the acetyl-CoA pocket. The active site involves His-138. Acetyl-CoA is bound by residues Asn-143 and 150–153 (YENR). Lys-156 is modified (N6-acetyllysine; by autocatalysis). The tract at residues 162-173 (PYYYSIRGVLKD) is required for homodimerization. A substrate-binding site is contributed by Tyr-165. Residues 193–236 (YIQHLGSALANLSPCSIPHRIYRQAQSLLCSFLPWSSISTKGGI) constitute an intramembrane region (helical). The Cytoplasmic segment spans residues 237-242 (EYSRTM).

This sequence belongs to the acetyltransferase family. NAA60 subfamily. Monomer and homodimer; monomer in presence of substrate and homodimer in its absence. Post-translationally, acetylated: autoacetylation is required for optimal acetyltransferase activity.

It is found in the golgi apparatus membrane. The enzyme catalyses N-terminal L-methionyl-[transmembrane protein] + acetyl-CoA = N-terminal N(alpha)-acetyl-L-methionyl-[transmembrane protein] + CoA + H(+). It carries out the reaction L-lysyl-[protein] + acetyl-CoA = N(6)-acetyl-L-lysyl-[protein] + CoA + H(+). N-alpha-acetyltransferase that specifically mediates the acetylation of N-terminal residues of the transmembrane proteins, with a strong preference for N-termini facing the cytosol. Displays N-terminal acetyltransferase activity towards a range of N-terminal sequences including those starting with Met-Lys, Met-Val, Met-Ala and Met-Met. Required for normal chromosomal segregation during anaphase. May also show histone acetyltransferase activity; such results are however unclear in vivo and would require additional experimental evidences. In Bos taurus (Bovine), this protein is N-alpha-acetyltransferase 60 (NAA60).